A 767-amino-acid chain; its full sequence is GPI ethanolamine phosphate transferase 2 (767 aa).

Asn186 and Asn401 each carry an N-linked (GlcNAc...) asparagine glycan. Transmembrane regions (helical) follow at residues 407–427 (LGLFVAALAVLLSFFPAYGLG) and 434–454 (VTFLMLIIISYGGMMFASSYV). Asn490 carries N-linked (GlcNAc...) asparagine glycosylation. 3 consecutive transmembrane segments (helical) span residues 513–533 (ILWALIILTYFDTCMHLCLNS), 538–558 (IWRSAAILTTIAAFFFKLVFV), and 595–615 (IPIFLMFRLQAIILDFLKMSA). Asn627 is a glycosylation site (N-linked (GlcNAc...) asparagine). A run of 3 helical transmembrane segments spans residues 655–675 (SVVLVGVLTFISNWAGPIWWA), 695–715 (TLLTFHAATSLMSVMAACTML), and 733–755 (LAWTILNHMFINLPATANVSQVL).

This sequence belongs to the PIGG/PIGN/PIGO family. PIGG subfamily.

Its subcellular location is the endoplasmic reticulum membrane. The protein operates within glycolipid biosynthesis; glycosylphosphatidylinositol-anchor biosynthesis. In terms of biological role, ethanolamine phosphate transferase involved in glycosylphosphatidylinositol-anchor biosynthesis. Transfers ethanolamine phosphate to the GPI second mannose. This chain is GPI ethanolamine phosphate transferase 2 (las21), found in Aspergillus fumigatus (strain ATCC MYA-4609 / CBS 101355 / FGSC A1100 / Af293) (Neosartorya fumigata).